Here is a 129-residue protein sequence, read N- to C-terminus: Ribonuclease P protein component (129 aa).

This sequence belongs to the RnpA family. In terms of assembly, consists of a catalytic RNA component (M1 or rnpB) and a protein subunit.

The catalysed reaction is Endonucleolytic cleavage of RNA, removing 5'-extranucleotides from tRNA precursor.. Its function is as follows. RNaseP catalyzes the removal of the 5'-leader sequence from pre-tRNA to produce the mature 5'-terminus. It can also cleave other RNA substrates such as 4.5S RNA. The protein component plays an auxiliary but essential role in vivo by binding to the 5'-leader sequence and broadening the substrate specificity of the ribozyme. The chain is Ribonuclease P protein component from Prochlorococcus marinus (strain MIT 9515).